A 361-amino-acid chain; its full sequence is Mycothiol acetyltransferase (361 aa).

N-acetyltransferase domains are found at residues 25–173 (PRVR…LPGS) and 195–361 (VTVL…AWKF). 1D-myo-inositol 2-(L-cysteinylamino)-2-deoxy-alpha-D-glucopyranoside is bound at residue glutamate 59. Position 98–100 (98–100 (LAV)) interacts with acetyl-CoA. 1D-myo-inositol 2-(L-cysteinylamino)-2-deoxy-alpha-D-glucopyranoside-binding residues include glutamate 229, lysine 280, and glutamate 295. Acetyl-CoA-binding positions include 299–301 (IGL) and 306–312 (QGRGLGR). Tyrosine 333 provides a ligand contact to 1D-myo-inositol 2-(L-cysteinylamino)-2-deoxy-alpha-D-glucopyranoside. 338–343 (NAPAVH) serves as a coordination point for acetyl-CoA.

It belongs to the acetyltransferase family. MshD subfamily. Monomer.

It carries out the reaction 1D-myo-inositol 2-(L-cysteinylamino)-2-deoxy-alpha-D-glucopyranoside + acetyl-CoA = mycothiol + CoA + H(+). Its function is as follows. Catalyzes the transfer of acetyl from acetyl-CoA to desacetylmycothiol (Cys-GlcN-Ins) to form mycothiol. This is Mycothiol acetyltransferase from Corynebacterium kroppenstedtii (strain DSM 44385 / JCM 11950 / CIP 105744 / CCUG 35717).